The primary structure comprises 116 residues: Large ribosomal subunit protein uL18 (116 aa).

It belongs to the universal ribosomal protein uL18 family. Part of the 50S ribosomal subunit; part of the 5S rRNA/L5/L18/L25 subcomplex. Contacts the 5S and 23S rRNAs.

This is one of the proteins that bind and probably mediate the attachment of the 5S RNA into the large ribosomal subunit, where it forms part of the central protuberance. This is Large ribosomal subunit protein uL18 from Shewanella putrefaciens (strain CN-32 / ATCC BAA-453).